Here is a 548-residue protein sequence, read N- to C-terminus: Probable malate:quinone oxidoreductase (548 aa).

The interval 521 to 548 (DKPQAADSTPKPQLKPQPVQKEVADIAL) is disordered. A compositionally biased stretch (low complexity) spans 530 to 541 (PKPQLKPQPVQK).

It belongs to the MQO family. Requires FAD as cofactor.

The enzyme catalyses (S)-malate + a quinone = a quinol + oxaloacetate. It participates in carbohydrate metabolism; tricarboxylic acid cycle; oxaloacetate from (S)-malate (quinone route): step 1/1. This chain is Probable malate:quinone oxidoreductase, found in Escherichia coli (strain 55989 / EAEC).